Reading from the N-terminus, the 40-residue chain is Dolichyl-diphosphooligosaccharide--protein glycosyltransferase subunit 4 (40 aa).

The Lumenal segment spans residues 1–4 (MITD). A helical transmembrane segment spans residues 5–25 (VQLAIFSNVLGVFLFLLVVAY). At 26–40 (HYINANTGKIGPKAK) the chain is on the cytoplasmic side.

Belongs to the OST4 family. In terms of assembly, component of the oligosaccharyltransferase (OST) complex.

It localises to the endoplasmic reticulum membrane. Subunit of the oligosaccharyl transferase (OST) complex that catalyzes the initial transfer of a defined glycan (Glc(3)Man(9)GlcNAc(2) in eukaryotes) from the lipid carrier dolichol-pyrophosphate to an asparagine residue within an Asn-X-Ser/Thr consensus motif in nascent polypeptide chains, the first step in protein N-glycosylation. N-glycosylation occurs cotranslationally and the complex associates with the Sec61 complex at the channel-forming translocon complex that mediates protein translocation across the endoplasmic reticulum (ER). All subunits are required for a maximal enzyme activity. The protein is Dolichyl-diphosphooligosaccharide--protein glycosyltransferase subunit 4 of Drosophila willistoni (Fruit fly).